The primary structure comprises 277 residues: Tumor necrosis factor-inducible gene 6 protein (277 aa).

The N-terminal stretch at 1-17 is a signal peptide; sequence MIILIYLFLLLWEDTQG. The 94-residue stretch at 36-129 folds into the Link domain; the sequence is GVYHREARSG…SERWDAYCYN (94 aa). Cystine bridges form between cysteine 58/cysteine 127, cysteine 82/cysteine 103, and cysteine 135/cysteine 161. N-linked (GlcNAc...) asparagine glycosylation occurs at asparagine 118. The region spanning 135-247 is the CUB domain; sequence CGGVFTDPKQ…GGFQIKYVAM (113 aa). Ca(2+)-binding residues include glutamate 183, aspartate 191, aspartate 232, serine 234, and valine 235. Residues cysteine 188 and cysteine 210 are joined by a disulfide bond. An N-linked (GlcNAc...) asparagine glycan is attached at asparagine 258.

In terms of assembly, interacts (via Link domain) with inter-alpha-inhibitor (I-alpha-I) component bikunin. Interacts with ITIH2/HC2; this interaction is required for transesterification of the HC to hyaluronan. Interacts (via Link and CUB domains) with ITIH1. Chondroitin sulfate may be required for the stability of the complex. Interacts (via Link domain) with various C-X-C and C-C chemokines including PF4, CXCL8, CXCL11, CXCL12, CCL2, CCL7, CCL19, CCL21, and CCL27; this interaction interferes with chemokine binding to glycosaminoglycans. Interacts (primarily via Link domain) with BMP2; this interaction is inhibited by hyaluronan. Interacts (via both Link and CUB domains) with TNFSF11. Interacts (via CUB domain) with FN1 (via type III repeats 9-14); this interaction enhances fibronectin fibril assembly. TNFAIP6 may act as a bridging molecule between FN1 and THBS1. Post-translationally, N-glycosylated. Expressed in airway epithelium and submucosal gland (at protein level). Colocalizes with bikunin at the ciliary border. Present in bronchoalveolar lavage fluid (at protein level). Expressed in mesenchymal stem cells. Found in the synovial fluid of patients with rheumatoid arthritis.

The protein localises to the secreted. In terms of biological role, major regulator of extracellular matrix organization during tissue remodeling. Catalyzes the transfer of a heavy chain (HC) from inter-alpha-inhibitor (I-alpha-I) complex to hyaluronan. Cleaves the ester bond between the C-terminus of the HC and GalNAc residue of the chondroitin sulfate chain in I-alpha-I complex followed by transesterification of the HC to hyaluronan. In the process, potentiates the antiprotease function of I-alpha-I complex through release of free bikunin. Acts as a catalyst in the formation of hyaluronan-HC oligomers and hyaluronan-rich matrix surrounding the cumulus cell-oocyte complex, a necessary step for oocyte fertilization. Assembles hyaluronan in pericellular matrices that serve as platforms for receptor clustering and signaling. Enables binding of hyaluronan deposited on the surface of macrophages to LYVE1 on lymphatic endothelium and facilitates macrophage extravasation. Alters hyaluronan binding to functionally latent CD44 on vascular endothelium, switching CD44 into an active state that supports leukocyte rolling. Modulates the interaction of chemokines with extracellular matrix components and proteoglycans on endothelial cell surface, likely preventing chemokine gradient formation. In a negative feedback mechanism, may limit excessive neutrophil recruitment at inflammatory sites by antagonizing the association of CXCL8 with glycosaminoglycans on vascular endothelium. Has a role in osteogenesis and bone remodeling. Inhibits BMP2-dependent differentiation of mesenchymal stem cell to osteoblasts. Protects against bone erosion during inflammation by inhibiting TNFSF11/RANKL-dependent osteoclast activation. The chain is Tumor necrosis factor-inducible gene 6 protein (TNFAIP6) from Homo sapiens (Human).